Consider the following 1013-residue polypeptide: Endosome/lysosome-associated apoptosis and autophagy regulator 1 (1013 aa).

Residues 1–41 (MAEPGHSHHLSARVRGRTERRIPRLWRLLLWAGTAFQVTQG) form the signal peptide. The Extracellular portion of the chain corresponds to 42–910 (TGPELHACKE…ICKTIDFWLK (869 aa)). Asn-153 is a glycosylation site (N-linked (GlcNAc...) asparagine). 3 disulfide bridges follow: Cys-278–Cys-295, Cys-308–Cys-330, and Cys-311–Cys-342. Asn-404 and Asn-672 each carry an N-linked (GlcNAc...) asparagine glycan. An MRH domain is found at 656 to 858 (NDCTFSRNTP…LWESAAACPL (203 aa)). 4 cysteine pairs are disulfide-bonded: Cys-658-Cys-704, Cys-714-Cys-739, Cys-808-Cys-844, and Cys-820-Cys-856. A helical transmembrane segment spans residues 911–931 (VGISAGTCTAILLTVLTCYFW). Residues 932–1013 (KKNQKLEYKY…TSSGGLDMDL (82 aa)) are Cytoplasmic-facing.

It belongs to the ELAPOR family. In terms of assembly, interacts with HSPA5; may regulate the function of HSPA5 in apoptosis and cell proliferation. In terms of tissue distribution, expressed in normal endometrium but overexpressed in endometroid tumors.

The protein resides in the cell membrane. It is found in the late endosome membrane. It localises to the golgi apparatus. The protein localises to the trans-Golgi network membrane. Its subcellular location is the lysosome membrane. The protein resides in the endoplasmic reticulum membrane. Its function is as follows. May protect cells from cell death by inducing cytosolic vacuolization and up-regulating the autophagy pathway. May play a role in apoptosis and cell proliferation through its interaction with HSPA5. In Homo sapiens (Human), this protein is Endosome/lysosome-associated apoptosis and autophagy regulator 1.